Here is a 288-residue protein sequence, read N- to C-terminus: Bifunctional protein FolD (288 aa).

Residues 165–167 and serine 190 contribute to the NADP(+) site; that span reads GRS.

This sequence belongs to the tetrahydrofolate dehydrogenase/cyclohydrolase family. As to quaternary structure, homodimer.

The enzyme catalyses (6R)-5,10-methylene-5,6,7,8-tetrahydrofolate + NADP(+) = (6R)-5,10-methenyltetrahydrofolate + NADPH. It carries out the reaction (6R)-5,10-methenyltetrahydrofolate + H2O = (6R)-10-formyltetrahydrofolate + H(+). Its pathway is one-carbon metabolism; tetrahydrofolate interconversion. In terms of biological role, catalyzes the oxidation of 5,10-methylenetetrahydrofolate to 5,10-methenyltetrahydrofolate and then the hydrolysis of 5,10-methenyltetrahydrofolate to 10-formyltetrahydrofolate. This chain is Bifunctional protein FolD, found in Bdellovibrio bacteriovorus (strain ATCC 15356 / DSM 50701 / NCIMB 9529 / HD100).